A 236-amino-acid chain; its full sequence is NAD(P)H-hydrate epimerase (236 aa).

In terms of domain architecture, YjeF N-terminal spans 11-217 (AAALDQELMS…AIASKYGFEV (207 aa)). Position 61–65 (61–65 (NNGGD)) interacts with (6S)-NADPHX. K(+) is bound by residues asparagine 62 and aspartate 123. (6S)-NADPHX is bound by residues 127-133 (GFSFSGE) and aspartate 156. Position 159 (serine 159) interacts with K(+).

It belongs to the NnrE/AIBP family. K(+) serves as cofactor.

It localises to the cytoplasm. The protein resides in the mitochondrion. It catalyses the reaction (6R)-NADHX = (6S)-NADHX. The enzyme catalyses (6R)-NADPHX = (6S)-NADPHX. Catalyzes the epimerization of the S- and R-forms of NAD(P)HX, a damaged form of NAD(P)H that is a result of enzymatic or heat-dependent hydration. This is a prerequisite for the S-specific NAD(P)H-hydrate dehydratase to allow the repair of both epimers of NAD(P)HX. In Fusarium vanettenii (strain ATCC MYA-4622 / CBS 123669 / FGSC 9596 / NRRL 45880 / 77-13-4) (Fusarium solani subsp. pisi), this protein is NAD(P)H-hydrate epimerase.